Here is a 142-residue protein sequence, read N- to C-terminus: Hemoglobin subunit alpha-2 (142 aa).

Residues leucine 2 to arginine 142 form the Globin domain. Histidine 59 provides a ligand contact to O2. Histidine 88 provides a ligand contact to heme b.

Belongs to the globin family. Heterotetramer of two alpha chains and two beta chains. In terms of tissue distribution, red blood cells.

Its function is as follows. Involved in oxygen transport from the lung to the various peripheral tissues. The polypeptide is Hemoglobin subunit alpha-2 (hba2) (Xenopus borealis (Kenyan clawed frog)).